A 740-amino-acid chain; its full sequence is MERTYQYAWIIPFVPLLVTMLIGLGLLLIPTATKNIRRIWAFPAVLLLSIVMVFSTKLAIQQINGSSIYEYLWSWSITSDFSLEFGYLIDPLTSIMSILITTVGIMVLIYSDNYMSHDQGYLRFFAYMSFFNTSMLGLVTSPNLIQIHIFWELVGMCSYLLIGFWFTRPIAANACQKAFVTNRVGDFGLLLGILGFYLITGSFEFQDLFEIFNDSIINNNEINSSFATLCAFLLFLGAVAKSAQFPLHVWLPDAMEGPTPISALIHAATMVAAGIFLVARLLPLFIGIPYIMNIISLIGLITVLLGATLALAQRDIKRSLAYSTMSQLGYIMLALGIGSYRAALFHLITHAYSKALLFLGSGSIIHSMEPIVGYSPAKSQNMVLMGGLTKYMPITKTTFFLGTLSLCGIPPLACFWSKDEIINDSWLYSPIFATIACYTAGLTAFYMFRMYLLTFEGHLRSNFKNYSGHTNSSFYSISIWGQEGSKPVSSNLLLATRNNNDKSSFSSCPFSNTYKIAGYVRNMRSSFSTHFLNKDPYTLLYPHESDNTMLFPLLILAIFTLFVGCIGIRFGQEVMEVDILSKWLTPSMKLLHQNSTEDWYKFVTNAFYSVSIAYFGIFIASVLYGSVYSDRQNLYLINSFAKMGPKMRIRLEQIINVIYNWSYNRGYIDVYYEKVFIRGIRGLAQLAHSFDRRVIDGVTNGVGVASFFLGEGIKYIGGGRISSYLFLYLACVSIVLLLVK.

The next 16 membrane-spanning stretches (helical) occupy residues 9-29 (WIIP…LLLI), 39-59 (IWAF…TKLA), 89-109 (IDPL…MVLI), 125-145 (FAYM…PNLI), 147-167 (IHIF…FWFT), 185-205 (GDFG…SFEF), 231-251 (AFLL…HVWL), 259-279 (TPIS…FLVA), 281-301 (LLPL…IGLI), 328-348 (LGYI…FHLI), 355-375 (ALLF…VGYS), 397-417 (TTFF…CFWS), 426-446 (WLYS…TAFY), 548-568 (TMLF…CIGI), 607-627 (FYSV…YGSV), and 719-739 (GRIS…LLLV).

It belongs to the complex I subunit 5 family. In terms of assembly, NDH is composed of at least 16 different subunits, 5 of which are encoded in the nucleus.

It localises to the plastid. The protein localises to the chloroplast thylakoid membrane. It carries out the reaction a plastoquinone + NADH + (n+1) H(+)(in) = a plastoquinol + NAD(+) + n H(+)(out). The enzyme catalyses a plastoquinone + NADPH + (n+1) H(+)(in) = a plastoquinol + NADP(+) + n H(+)(out). In terms of biological role, NDH shuttles electrons from NAD(P)H:plastoquinone, via FMN and iron-sulfur (Fe-S) centers, to quinones in the photosynthetic chain and possibly in a chloroplast respiratory chain. The immediate electron acceptor for the enzyme in this species is believed to be plastoquinone. Couples the redox reaction to proton translocation, and thus conserves the redox energy in a proton gradient. The chain is NAD(P)H-quinone oxidoreductase subunit 5, chloroplastic (ndhF) from Nuphar advena (Common spatterdock).